A 495-amino-acid chain; its full sequence is Protein-serine O-palmitoleoyltransferase porcupine (495 aa).

Helical transmembrane passes span 46–66 (TQYITNFIAINLLFSVLVLIV), 92–112 (VIDHGFYHFLQLAVSLYAVQW), 184–204 (TVLSYSGYILCPANIVLGPWI), 232–252 (MLIHVFRIVTSALMAVGFLLT), 358–378 (PFGTGTAIALTYIISSLLHGL), 403–422 (LATIYSACVLVGKCPSSCTV), 434–454 (VINMLFFALNIFNLIYLGCIF), and 475–495 (TELNYASHWLLVFAYLFYFVI). The active site involves His376.

Belongs to the membrane-bound acyltransferase family. Porcupine subfamily.

Its subcellular location is the endoplasmic reticulum membrane. It catalyses the reaction [Wnt protein]-L-serine + (9Z)-hexadecenoyl-CoA = [Wnt protein]-O-(9Z)-hexadecenoyl-L-serine + CoA. In terms of biological role, protein-serine O-palmitoleoyltransferase that acts as a key regulator of the Wnt signaling pathway by mediating the attachment of palmitoleate, a 16-carbon monounsaturated fatty acid (C16:1(9Z)), to Wnt proteins. Serine palmitoleoylation of WNT proteins is required for efficient binding to frizzled receptors. The sequence is that of Protein-serine O-palmitoleoyltransferase porcupine from Anopheles gambiae (African malaria mosquito).